The sequence spans 318 residues: Phosphatidylglycerol--prolipoprotein diacylglyceryl transferase (318 aa).

Transmembrane regions (helical) follow at residues 24 to 44 (GPSTFSILMMIGFLTASYLLP), 60 to 80 (LLLLGILGTLVGAKIFFVFEI), and 115 to 135 (LFSGSGLVFYGGFLFGILFIT). Position 164 (R164) interacts with a 1,2-diacyl-sn-glycero-3-phospho-(1'-sn-glycerol). 2 consecutive transmembrane segments (helical) span residues 198-218 (VPVWNTPLIESIISFLFFFYF) and 285-305 (GFSQSQLVSIIIILVGAFFIL).

The protein belongs to the Lgt family.

It localises to the cell inner membrane. The enzyme catalyses L-cysteinyl-[prolipoprotein] + a 1,2-diacyl-sn-glycero-3-phospho-(1'-sn-glycerol) = an S-1,2-diacyl-sn-glyceryl-L-cysteinyl-[prolipoprotein] + sn-glycerol 1-phosphate + H(+). It functions in the pathway protein modification; lipoprotein biosynthesis (diacylglyceryl transfer). Its function is as follows. Catalyzes the transfer of the diacylglyceryl group from phosphatidylglycerol to the sulfhydryl group of the N-terminal cysteine of a prolipoprotein, the first step in the formation of mature lipoproteins. The protein is Phosphatidylglycerol--prolipoprotein diacylglyceryl transferase of Leptospira interrogans serogroup Icterohaemorrhagiae serovar copenhageni (strain Fiocruz L1-130).